The primary structure comprises 153 residues: Myosin regulatory light chain (153 aa).

Blocked amino end (Ala) is present on Ala1. 2 consecutive EF-hand domains span residues 15–50 and 81–116; these read KQIQ…LGRT and DSEE…MGNN. Positions 28, 30, 32, and 39 each coordinate Ca(2+).

In molluscan muscle, calcium regulation is associated with myosin rather than with actin. Muscle myosin contains two types of light chains: the catalytic light chain, essential for ATPase activity, and the regulatory light chain, a calcium-binding protein responsible for Ca(2+) dependent binding and Ca(2+) dependent Mg-ATPase activity. This Patinopecten sp. (Scallop) protein is Myosin regulatory light chain.